The chain runs to 445 residues: Tubulin beta-4B chain (445 aa).

Residues 1-4 (MREI) carry the MREI motif motif. Q11 serves as a coordination point for GTP. A Phosphothreonine modification is found at T55. K58 bears the N6-acetyllysine mark. GTP contacts are provided by E69, S138, G142, T143, and G144. E69 contributes to the Mg(2+) binding site. At S172 the chain carries Phosphoserine; by CDK1. Positions 204 and 226 each coordinate GTP. The segment at 426 to 445 (QDATAEEEGEFEEEAEEEVA) is disordered. Acidic residues predominate over residues 429-445 (TAEEEGEFEEEAEEEVA). E438 is modified (5-glutamyl polyglutamate).

Belongs to the tubulin family. As to quaternary structure, dimer of alpha and beta chains. A typical microtubule is a hollow water-filled tube with an outer diameter of 25 nm and an inner diameter of 15 nM. Alpha-beta heterodimers associate head-to-tail to form protofilaments running lengthwise along the microtubule wall with the beta-tubulin subunit facing the microtubule plus end conferring a structural polarity. Microtubules usually have 13 protofilaments but different protofilament numbers can be found in some organisms and specialized cells. Component of sperm flagellar doublet microtubules. It depends on Mg(2+) as a cofactor. Post-translationally, some glutamate residues at the C-terminus are polyglycylated, resulting in polyglycine chains on the gamma-carboxyl group. Glycylation is mainly limited to tubulin incorporated into axonemes (cilia and flagella) whereas glutamylation is prevalent in neuronal cells, centrioles, axonemes, and the mitotic spindle. Both modifications can coexist on the same protein on adjacent residues, and lowering polyglycylation levels increases polyglutamylation, and reciprocally. Cilia and flagella glycylation is required for their stability and maintenance. Flagella glycylation controls sperm motility. In terms of processing, some glutamate residues at the C-terminus are polyglutamylated, resulting in polyglutamate chains on the gamma-carboxyl group. Polyglutamylation plays a key role in microtubule severing by spastin (SPAST). SPAST preferentially recognizes and acts on microtubules decorated with short polyglutamate tails: severing activity by SPAST increases as the number of glutamates per tubulin rises from one to eight, but decreases beyond this glutamylation threshold. Glutamylation is also involved in cilia motility. Phosphorylated on Ser-172 by CDK1 during the cell cycle, from metaphase to telophase, but not in interphase. This phosphorylation inhibits tubulin incorporation into microtubules.

It localises to the cytoplasm. The protein resides in the cytoskeleton. The protein localises to the flagellum axoneme. Its function is as follows. Tubulin is the major constituent of microtubules, a cylinder consisting of laterally associated linear protofilaments composed of alpha- and beta-tubulin heterodimers. Microtubules grow by the addition of GTP-tubulin dimers to the microtubule end, where a stabilizing cap forms. Below the cap, tubulin dimers are in GDP-bound state, owing to GTPase activity of alpha-tubulin. The sequence is that of Tubulin beta-4B chain (Tubb4b) from Rattus norvegicus (Rat).